We begin with the raw amino-acid sequence, 291 residues long: Acetyl-coenzyme A carboxylase carboxyl transferase subunit beta (291 aa).

In terms of domain architecture, CoA carboxyltransferase N-terminal spans 34 to 291 (MWTKCSNCNS…LILHGVNKYE (258 aa)). Zn(2+) contacts are provided by C38, C41, C57, and C60. Residues 38-60 (CSNCNSMIYYEDLENNKYVCTKC) form a C4-type zinc finger.

Belongs to the AccD/PCCB family. Acetyl-CoA carboxylase is a heterohexamer composed of biotin carboxyl carrier protein (AccB), biotin carboxylase (AccC) and two subunits each of ACCase subunit alpha (AccA) and ACCase subunit beta (AccD). Zn(2+) serves as cofactor.

It localises to the cytoplasm. It carries out the reaction N(6)-carboxybiotinyl-L-lysyl-[protein] + acetyl-CoA = N(6)-biotinyl-L-lysyl-[protein] + malonyl-CoA. It participates in lipid metabolism; malonyl-CoA biosynthesis; malonyl-CoA from acetyl-CoA: step 1/1. Its function is as follows. Component of the acetyl coenzyme A carboxylase (ACC) complex. Biotin carboxylase (BC) catalyzes the carboxylation of biotin on its carrier protein (BCCP) and then the CO(2) group is transferred by the transcarboxylase to acetyl-CoA to form malonyl-CoA. This chain is Acetyl-coenzyme A carboxylase carboxyl transferase subunit beta, found in Clostridium botulinum (strain Alaska E43 / Type E3).